Reading from the N-terminus, the 805-residue chain is Sucrose synthase (805 aa).

The interval 275-752 is GT-B glycosyltransferase; that stretch reads MVFNVVILSP…GLQRIEEKYT (478 aa).

The protein belongs to the glycosyltransferase 1 family. Plant sucrose synthase subfamily.

The catalysed reaction is an NDP-alpha-D-glucose + D-fructose = a ribonucleoside 5'-diphosphate + sucrose + H(+). In terms of biological role, sucrose-cleaving enzyme that provides UDP-glucose and fructose for various metabolic pathways. This Medicago sativa (Alfalfa) protein is Sucrose synthase.